Reading from the N-terminus, the 275-residue chain is Structure-specific endonuclease subunit SLX1 (275 aa).

Residues 12–95 form the GIY-YIG domain; sequence RFFGVYLLYC…QHPHASRRLA (84 aa). Pro residues predominate over residues 148-161; the sequence is HVPLAFGPPPPQAP. The segment at 148-179 is disordered; it reads HVPLAFGPPPPQAPAPRRRAGPFDDAEPEPDQ. The SLX1-type zinc finger occupies 186 to 238; sequence CSLCAQTIQDEEGPLCCPHPGCLLRAHVICLAEEFLQEEPGQLLPLEGQCPCC.

Belongs to the SLX1 family. As to quaternary structure, forms a heterodimer with SLX4. A divalent metal cation serves as cofactor.

It localises to the nucleus. In terms of biological role, catalytic subunit of the SLX1-SLX4 structure-specific endonuclease that resolves DNA secondary structures generated during DNA repair and recombination. Has endonuclease activity towards branched DNA substrates, introducing single-strand cuts in duplex DNA close to junctions with ss-DNA. Has a preference for 5'-flap structures, and promotes symmetrical cleavage of static and migrating Holliday junctions (HJs). Resolves HJs by generating two pairs of ligatable, nicked duplex products. The polypeptide is Structure-specific endonuclease subunit SLX1 (Homo sapiens (Human)).